Reading from the N-terminus, the 344-residue chain is Biotin synthase (344 aa).

The region spanning 40-267 (AQVQVSTLLS…KSMVRLSAGR (228 aa)) is the Radical SAM core domain. Residues Cys55, Cys59, and Cys62 each coordinate [4Fe-4S] cluster. [2Fe-2S] cluster is bound by residues Cys99, Cys130, Cys190, and Arg262.

This sequence belongs to the radical SAM superfamily. Biotin synthase family. Homodimer. [4Fe-4S] cluster is required as a cofactor. The cofactor is [2Fe-2S] cluster.

The catalysed reaction is (4R,5S)-dethiobiotin + (sulfur carrier)-SH + 2 reduced [2Fe-2S]-[ferredoxin] + 2 S-adenosyl-L-methionine = (sulfur carrier)-H + biotin + 2 5'-deoxyadenosine + 2 L-methionine + 2 oxidized [2Fe-2S]-[ferredoxin]. It functions in the pathway cofactor biosynthesis; biotin biosynthesis; biotin from 7,8-diaminononanoate: step 2/2. Catalyzes the conversion of dethiobiotin (DTB) to biotin by the insertion of a sulfur atom into dethiobiotin via a radical-based mechanism. In Xanthomonas axonopodis pv. citri (strain 306), this protein is Biotin synthase.